A 475-amino-acid polypeptide reads, in one-letter code: Ribulose bisphosphate carboxylase large chain (475 aa).

The propeptide occupies 1–2 (MS). N-acetylproline is present on Pro3. Residue Lys14 is modified to N6,N6,N6-trimethyllysine. 2 residues coordinate substrate: Asn123 and Thr173. Lys175 acts as the Proton acceptor in catalysis. Lys177 is a binding site for substrate. Mg(2+) is bound by residues Lys201, Asp203, and Glu204. At Lys201 the chain carries N6-carboxylysine. His294 acts as the Proton acceptor in catalysis. Residues Arg295, His327, and Ser379 each contribute to the substrate site.

The protein belongs to the RuBisCO large chain family. Type I subfamily. In terms of assembly, heterohexadecamer of 8 large chains and 8 small chains; disulfide-linked. The disulfide link is formed within the large subunit homodimers. The cofactor is Mg(2+). In terms of processing, the disulfide bond which can form in the large chain dimeric partners within the hexadecamer appears to be associated with oxidative stress and protein turnover.

It localises to the plastid. The protein localises to the chloroplast. It carries out the reaction 2 (2R)-3-phosphoglycerate + 2 H(+) = D-ribulose 1,5-bisphosphate + CO2 + H2O. It catalyses the reaction D-ribulose 1,5-bisphosphate + O2 = 2-phosphoglycolate + (2R)-3-phosphoglycerate + 2 H(+). Functionally, ruBisCO catalyzes two reactions: the carboxylation of D-ribulose 1,5-bisphosphate, the primary event in carbon dioxide fixation, as well as the oxidative fragmentation of the pentose substrate in the photorespiration process. Both reactions occur simultaneously and in competition at the same active site. The protein is Ribulose bisphosphate carboxylase large chain of Populus trichocarpa (Western balsam poplar).